The primary structure comprises 605 residues: Translation factor GUF1 homolog, chloroplastic (605 aa).

The 183-residue stretch at 7 to 189 (RRIRNFSIIA…RIVQVVPPPR (183 aa)) folds into the tr-type G domain. GTP-binding positions include 16–23 (AHIDHGKS), 82–86 (DTPGH), and 136–139 (NKID).

This sequence belongs to the TRAFAC class translation factor GTPase superfamily. Classic translation factor GTPase family. LepA subfamily.

The protein resides in the plastid. Its subcellular location is the chloroplast. The enzyme catalyses GTP + H2O = GDP + phosphate + H(+). In terms of biological role, promotes chloroplast protein synthesis. May act as a fidelity factor of the translation reaction, by catalyzing a one-codon backward translocation of tRNAs on improperly translocated ribosomes. This chain is Translation factor GUF1 homolog, chloroplastic, found in Ostreococcus lucimarinus (strain CCE9901).